The chain runs to 371 residues: ATP-dependent protease ATP-binding subunit-like protein AmiB (371 aa).

ATP is bound at residue glycine 96–threonine 103.

This sequence belongs to the ClpX chaperone family. Mg(2+) serves as cofactor.

Functionally, unlikely to encode a regulatory protein. Has ATPase activity. AmiB and AmiS may act jointly into a two component ABC transporter system. This is ATP-dependent protease ATP-binding subunit-like protein AmiB (amiB) from Pseudomonas aeruginosa (strain ATCC 15692 / DSM 22644 / CIP 104116 / JCM 14847 / LMG 12228 / 1C / PRS 101 / PAO1).